The following is a 286-amino-acid chain: Large ribosomal subunit protein uL4m (286 aa).

Residues 1–26 constitute a mitochondrion transit peptide; it reads MTIKRNLVKTLQSIRYQATTATAHAE. Residues 85-132 form a disordered region; the sequence is RRVGASNPPGRSENGFSRRKLMPQKGSGRARVGDANSPTRHNGGRALA.

This sequence belongs to the universal ribosomal protein uL4 family. In terms of assembly, component of the mitochondrial large ribosomal subunit (mt-LSU). Mature yeast 74S mitochondrial ribosomes consist of a small (37S) and a large (54S) subunit. The 37S small subunit contains a 15S ribosomal RNA (15S mt-rRNA) and 34 different proteins. The 54S large subunit contains a 21S rRNA (21S mt-rRNA) and 46 different proteins.

It localises to the mitochondrion. Its function is as follows. Component of the mitochondrial ribosome (mitoribosome), a dedicated translation machinery responsible for the synthesis of mitochondrial genome-encoded proteins, including at least some of the essential transmembrane subunits of the mitochondrial respiratory chain. The mitoribosomes are attached to the mitochondrial inner membrane and translation products are cotranslationally integrated into the membrane. This chain is Large ribosomal subunit protein uL4m (YML6), found in Saccharomyces cerevisiae (strain ATCC 204508 / S288c) (Baker's yeast).